A 290-amino-acid polypeptide reads, in one-letter code: 4-diphosphocytidyl-2-C-methyl-D-erythritol kinase (290 aa).

K10 is an active-site residue. P96–S106 is a binding site for ATP. The active site involves D138.

This sequence belongs to the GHMP kinase family. IspE subfamily.

The enzyme catalyses 4-CDP-2-C-methyl-D-erythritol + ATP = 4-CDP-2-C-methyl-D-erythritol 2-phosphate + ADP + H(+). It participates in isoprenoid biosynthesis; isopentenyl diphosphate biosynthesis via DXP pathway; isopentenyl diphosphate from 1-deoxy-D-xylulose 5-phosphate: step 3/6. Catalyzes the phosphorylation of the position 2 hydroxy group of 4-diphosphocytidyl-2C-methyl-D-erythritol. The chain is 4-diphosphocytidyl-2-C-methyl-D-erythritol kinase from Caulobacter vibrioides (strain NA1000 / CB15N) (Caulobacter crescentus).